A 132-amino-acid polypeptide reads, in one-letter code: MFDGEDLKKIFAMDGFLRNIEFEVSYISEGSIEIKVPLKENLMRVGDIMNGGAIMAISDAIGGLTVMTYGSVINQVTVNFNTEFIRPIGTGPVIFRSSMVRIGKNIAYVDVAAIDGNGQLCSKSMGTYYIYR.

The protein belongs to the thioesterase PaaI family.

The sequence is that of Putative esterase Ta0293 from Thermoplasma acidophilum (strain ATCC 25905 / DSM 1728 / JCM 9062 / NBRC 15155 / AMRC-C165).